A 231-amino-acid chain; its full sequence is Large ribosomal subunit protein uL1 (231 aa).

This sequence belongs to the universal ribosomal protein uL1 family. As to quaternary structure, part of the 50S ribosomal subunit.

Its function is as follows. Binds directly to 23S rRNA. The L1 stalk is quite mobile in the ribosome, and is involved in E site tRNA release. Functionally, protein L1 is also a translational repressor protein, it controls the translation of the L11 operon by binding to its mRNA. The polypeptide is Large ribosomal subunit protein uL1 (Halorhodospira halophila (strain DSM 244 / SL1) (Ectothiorhodospira halophila (strain DSM 244 / SL1))).